The primary structure comprises 307 residues: Heme A synthase (307 aa).

At Met1–Arg6 the chain is on the cytoplasmic side. Residues Leu7–Thr27 traverse the membrane as a helical segment. Topologically, residues Lys28–Gly65 are extracellular. The cysteines at positions 35 and 42 are disulfide-linked. Glu57 is an active-site residue. His60 lines the heme o pocket. The chain crosses the membrane as a helical span at residues Val66–Phe86. Residues Arg87–Leu92 are Cytoplasmic-facing. Residues Val93–Phe113 form a helical membrane-spanning segment. The Extracellular segment spans residues Gly114–Ala121. Residues Leu122–Phe142 traverse the membrane as a helical segment. His123 serves as a coordination point for heme o. Over Glu143–Met161 the chain is Cytoplasmic. Residues Gln162–Val182 traverse the membrane as a helical segment. Over Arg183–Arg216 the chain is Extracellular. Cys191 and Cys197 are oxidised to a cystine. A heme b-binding site is contributed by His215. A helical membrane pass occupies residues Ala217–Tyr237. Residues Lys238–Gln242 lie on the Cytoplasmic side of the membrane. Residues Leu243–Met263 form a helical membrane-spanning segment. At Ser264–Ala274 the chain is on the extracellular side. A helical membrane pass occupies residues Leu275–Ile295. Heme b is bound at residue His277. Topologically, residues Ala296 to Lys307 are cytoplasmic.

It belongs to the COX15/CtaA family. Type 1 subfamily. Interacts with CtaB. Heme b serves as cofactor.

The protein resides in the cell membrane. It carries out the reaction Fe(II)-heme o + 2 A + H2O = Fe(II)-heme a + 2 AH2. It participates in porphyrin-containing compound metabolism; heme A biosynthesis; heme A from heme O: step 1/1. Functionally, catalyzes the conversion of heme O to heme A by two successive hydroxylations of the methyl group at C8. The first hydroxylation forms heme I, the second hydroxylation results in an unstable dihydroxymethyl group, which spontaneously dehydrates, resulting in the formyl group of heme A. In Bacillus pumilus (strain SAFR-032), this protein is Heme A synthase.